Here is a 471-residue protein sequence, read N- to C-terminus: tRNA modification GTPase MnmE (471 aa).

The (6S)-5-formyl-5,6,7,8-tetrahydrofolate site is built by arginine 26, glutamate 83, and lysine 136. Positions 232-393 constitute a TrmE-type G domain; sequence GLRVVLAGQP…LRRRLLQLAG (162 aa). Asparagine 242 lines the K(+) pocket. GTP is bound by residues 242–247, 261–267, 286–289, 354–357, and 374–376; these read NVGKSS, TPIAGTT, DTAG, NKAD, and SAR. A Mg(2+)-binding site is contributed by serine 246. 3 residues coordinate K(+): threonine 261, isoleucine 263, and threonine 266. Residue threonine 267 coordinates Mg(2+). Lysine 471 contributes to the (6S)-5-formyl-5,6,7,8-tetrahydrofolate binding site.

It belongs to the TRAFAC class TrmE-Era-EngA-EngB-Septin-like GTPase superfamily. TrmE GTPase family. Homodimer. Heterotetramer of two MnmE and two MnmG subunits. It depends on K(+) as a cofactor.

It localises to the cytoplasm. Its function is as follows. Exhibits a very high intrinsic GTPase hydrolysis rate. Involved in the addition of a carboxymethylaminomethyl (cmnm) group at the wobble position (U34) of certain tRNAs, forming tRNA-cmnm(5)s(2)U34. In Methylibium petroleiphilum (strain ATCC BAA-1232 / LMG 22953 / PM1), this protein is tRNA modification GTPase MnmE.